We begin with the raw amino-acid sequence, 570 residues long: Developmental and secondary metabolism regulator veA (570 aa).

4 disordered regions span residues 1–24, 39–60, 266–491, and 504–541; these read MATR…ISRE, ERAR…VDPP, DMYA…LGSG, and KRSH…DYGR. Positions 25–231 constitute a Velvet domain; that stretch reads GKKITYKLSV…AEQGCRVRIR (207 aa). A Nuclear localization signal motif is present at residues 39-44; sequence ERARAC. Over residues 278–287 the composition is skewed to polar residues; that stretch reads STSISTTADT. Residues 315-335 are compositionally biased toward low complexity; sequence SMPAASAAPAPAPVHSPATSA. 3 stretches are compositionally biased toward polar residues: residues 336 to 354, 363 to 395, and 427 to 445; these read QTSS…SQYP, QSAT…TSSG, and NMQT…YPTL. The interval 454–493 is PEST; the sequence is PTPANHVTSLPPLKVLSGEYSHPSQPNAQSPHHDLGSGKR. Residues 505–526 are compositionally biased toward basic and acidic residues; the sequence is RSHEETFGSDERPLHNGMRPDM.

The protein belongs to the velvet family. VeA subfamily. Component of the heterotrimeric velvet complex composed of laeA, veA and velB; VeA acting as a bridging protein between laeA and velB.

Its subcellular location is the nucleus. The protein resides in the cytoplasm. In terms of biological role, component of the velvet transcription factor complex that controls sexual/asexual developmental ratio in response to light, promoting sexual development in the darkness while stimulating asexual sporulation under illumination. The velvet complex hat acts as a global regulator for secondary metabolite gene expression. Controls the expression of hundreds of genes, including those comprising more than a dozen known secondary metabolite gene clusters. Controls the expression of the gliotoxin gene cluster. Controls the expression of the fumagillin, fumitremorgin G, fumigaclavine C and glionitrin gene clusters. The regulation of the fumagillin gene cluster and fumagillin production is performed through direct control of the expression of fumR. Negatively regulates conidiation. Required for normal protease activity. The polypeptide is Developmental and secondary metabolism regulator veA (Aspergillus fumigatus (strain ATCC MYA-4609 / CBS 101355 / FGSC A1100 / Af293) (Neosartorya fumigata)).